The primary structure comprises 267 residues: Malonyl-[acyl-carrier protein] O-methyltransferase (267 aa).

It belongs to the methyltransferase superfamily.

It carries out the reaction malonyl-[ACP] + S-adenosyl-L-methionine = malonyl-[ACP] methyl ester + S-adenosyl-L-homocysteine. Its pathway is cofactor biosynthesis; biotin biosynthesis. In terms of biological role, converts the free carboxyl group of a malonyl-thioester to its methyl ester by transfer of a methyl group from S-adenosyl-L-methionine (SAM). It allows to synthesize pimeloyl-ACP via the fatty acid synthetic pathway. The protein is Malonyl-[acyl-carrier protein] O-methyltransferase of Yersinia pestis.